We begin with the raw amino-acid sequence, 49 residues long: U1-theraphotoxin-Lp1b (49 aa).

4 cysteine pairs are disulfide-bonded: Cys4-Cys17, Cys8-Cys41, Cys22-Cys24, and Cys35-Cys46.

In terms of tissue distribution, expressed by the venom gland.

The protein resides in the secreted. Its function is as follows. Toxin that causes irreversible contractile paralysis into adult Aedes aegypti resulting in 100% mortality after 24 hours. The protein is U1-theraphotoxin-Lp1b of Lasiodora parahybana (Brazilian salmon pink birdeater).